The following is a 114-amino-acid chain: Turripeptide OL22 (114 aa).

Contains 6 disulfide bonds. In terms of tissue distribution, expressed by the venom duct.

Its subcellular location is the secreted. Acts as a neurotoxin by inhibiting an ion channel. This is Turripeptide OL22 from Iotyrris olangoensis (Sea snail).